The chain runs to 282 residues: Formamidopyrimidine-DNA glycosylase (282 aa).

Residue P2 is the Schiff-base intermediate with DNA of the active site. E3 (proton donor) is an active-site residue. K61 serves as the catalytic Proton donor; for beta-elimination activity. 3 residues coordinate DNA: H93, R112, and K158. The FPG-type zinc finger occupies 244–278 (DAYGREGEGCRRCGAVMHREKFMNRSSFYCPRCQP). R268 acts as the Proton donor; for delta-elimination activity in catalysis.

This sequence belongs to the FPG family. In terms of assembly, monomer. Zn(2+) serves as cofactor.

The catalysed reaction is Hydrolysis of DNA containing ring-opened 7-methylguanine residues, releasing 2,6-diamino-4-hydroxy-5-(N-methyl)formamidopyrimidine.. It carries out the reaction 2'-deoxyribonucleotide-(2'-deoxyribose 5'-phosphate)-2'-deoxyribonucleotide-DNA = a 3'-end 2'-deoxyribonucleotide-(2,3-dehydro-2,3-deoxyribose 5'-phosphate)-DNA + a 5'-end 5'-phospho-2'-deoxyribonucleoside-DNA + H(+). Its function is as follows. Involved in base excision repair of DNA damaged by oxidation or by mutagenic agents. Acts as a DNA glycosylase that recognizes and removes damaged bases. Has a preference for oxidized purines, such as 7,8-dihydro-8-oxoguanine (8-oxoG). Has AP (apurinic/apyrimidinic) lyase activity and introduces nicks in the DNA strand. Cleaves the DNA backbone by beta-delta elimination to generate a single-strand break at the site of the removed base with both 3'- and 5'-phosphates. This chain is Formamidopyrimidine-DNA glycosylase, found in Mycobacterium leprae (strain Br4923).